We begin with the raw amino-acid sequence, 232 residues long: Small heat shock protein, chloroplastic (232 aa).

Polar residues predominate over residues 1–25; the sequence is MAQSVSLSTIASPILSQKPGSSVKS. Disordered stretches follow at residues 1–35 and 48–81; these read MAQS…SFPL and RAQA…RKPR. A chloroplast-targeting transit peptide spans 1 to 46; the sequence is MAQSVSLSTIASPILSQKPGSSVKSTPPCMASFPLRRQLPRLGLRN. Over residues 55–78 the composition is skewed to basic and acidic residues; it reads GDNKDNSVEVHRVNKDDQGTAVER. The 109-residue stretch at 124–232 folds into the sHSP domain; that stretch reads IGGGEIRVPW…ERTVIDVQIQ (109 aa).

It belongs to the small heat shock protein (HSP20) family.

It localises to the plastid. It is found in the chloroplast. The protein is Small heat shock protein, chloroplastic (HSP21) of Pisum sativum (Garden pea).